Consider the following 428-residue polypeptide: Gamma-glutamyl phosphate reductase (428 aa).

The protein belongs to the gamma-glutamyl phosphate reductase family.

Its subcellular location is the cytoplasm. The enzyme catalyses L-glutamate 5-semialdehyde + phosphate + NADP(+) = L-glutamyl 5-phosphate + NADPH + H(+). It participates in amino-acid biosynthesis; L-proline biosynthesis; L-glutamate 5-semialdehyde from L-glutamate: step 2/2. Functionally, catalyzes the NADPH-dependent reduction of L-glutamate 5-phosphate into L-glutamate 5-semialdehyde and phosphate. The product spontaneously undergoes cyclization to form 1-pyrroline-5-carboxylate. This is Gamma-glutamyl phosphate reductase from Chelativorans sp. (strain BNC1).